Consider the following 267-residue polypeptide: Phosphatidylglycerol--prolipoprotein diacylglyceryl transferase (267 aa).

7 consecutive transmembrane segments (helical) span residues 17 to 37, 56 to 76, 91 to 111, 120 to 140, 173 to 193, 199 to 219, and 236 to 256; these read LNIR…WLLA, LVTY…TLFY, IWNG…AIWL, LFEV…AGRL, QLYE…LFSA, MAVS…VEFF, and MGQI…GFAM. An a 1,2-diacyl-sn-glycero-3-phospho-(1'-sn-glycerol)-binding site is contributed by arginine 139.

It belongs to the Lgt family.

The protein resides in the cell inner membrane. The enzyme catalyses L-cysteinyl-[prolipoprotein] + a 1,2-diacyl-sn-glycero-3-phospho-(1'-sn-glycerol) = an S-1,2-diacyl-sn-glyceryl-L-cysteinyl-[prolipoprotein] + sn-glycerol 1-phosphate + H(+). Its pathway is protein modification; lipoprotein biosynthesis (diacylglyceryl transfer). In terms of biological role, catalyzes the transfer of the diacylglyceryl group from phosphatidylglycerol to the sulfhydryl group of the N-terminal cysteine of a prolipoprotein, the first step in the formation of mature lipoproteins. The polypeptide is Phosphatidylglycerol--prolipoprotein diacylglyceryl transferase (Oleidesulfovibrio alaskensis (strain ATCC BAA-1058 / DSM 17464 / G20) (Desulfovibrio alaskensis)).